The sequence spans 143 residues: 3-dehydroquinate dehydratase (143 aa).

Tyr22 acts as the Proton acceptor in catalysis. Asn73, His79, and Asp86 together coordinate substrate. The Proton donor role is filled by His99. Substrate-binding positions include 100 to 101 (IS) and Arg110.

The protein belongs to the type-II 3-dehydroquinase family. As to quaternary structure, homododecamer.

The enzyme catalyses 3-dehydroquinate = 3-dehydroshikimate + H2O. Its pathway is metabolic intermediate biosynthesis; chorismate biosynthesis; chorismate from D-erythrose 4-phosphate and phosphoenolpyruvate: step 3/7. Catalyzes a trans-dehydration via an enolate intermediate. This chain is 3-dehydroquinate dehydratase, found in Mycolicibacterium paratuberculosis (strain ATCC BAA-968 / K-10) (Mycobacterium paratuberculosis).